The following is a 613-amino-acid chain: Pentatricopeptide repeat-containing protein At2g45350, chloroplastic (613 aa).

PPR repeat units lie at residues 85–119, 120–154, 155–185, 186–216, 219–250, 251–285, 286–312, 313–347, 349–383, 384–414, 415–449, 450–480, and 486–516; these read DPFLWNAVIKSHSHGKDPRQALLLLCLMLENGVSV, DKFSLSLVLKACSRLGFVKGGMQIHGFLKKTGLWS, DLFLQNCLIGLYLKCGCLGLSRQMFDRMPKR, DSVSYNSMIDGYVKCGLIVSARELFDLMPME, NLISWNSMISGYAQTSDGVDIASKLFADMPEK, DLISWNSMIDGYVKHGRIEDAKGLFDVMPRRDVVT, WATMIDGYAKLGFVHHAKTLFDQMPHR, DVVAYNSMMAGYVQNKYHMEALEIFSDMEKESHLL, DDTTLVIVLPAIAQLGRLSKAIDMHLYIVEKQFYL, GGKLGVALIDMYSKCGSIQHAMLVFEGIENK, SIDHWNAMIGGLAIHGLGESAFDMLLQIERLSLKP, DDITFVGVLNACSHSGLVKEGLLCFELMRRK, and RLQHYGCMVDILSRSGSIELAKNLIEEMPVE. Residues 521-596 form a type E motif region; it reads IWRTFLTACS…IPGCSWIELD (76 aa).

Belongs to the PPR family. PCMP-E subfamily. Interacts with DYW1.

It is found in the plastid. The protein localises to the chloroplast. Functionally, plays a major role in chloroplast RNA editing. Acts as a site-recognition transacting factor to recruit C-deaminase. Involved in single RNA editing events. Required for the edition of the site 1 of ndhD (ndhD-1 site corresponding to cytidine-2), which is a plastid-encoded subunit of the NADH-plastoquinone oxidoreductase. The interaction with DYW1 is required for its function in editing the ndhD-1 site. The chain is Pentatricopeptide repeat-containing protein At2g45350, chloroplastic (CRR4) from Arabidopsis thaliana (Mouse-ear cress).